The following is a 240-amino-acid chain: LexA repressor (240 aa).

Positions 26 to 46 (FDEMKEALDLASKSGIHRLIT) form a DNA-binding region, H-T-H motif. Catalysis depends on for autocatalytic cleavage activity residues S161 and K199.

It belongs to the peptidase S24 family. In terms of assembly, homodimer.

The enzyme catalyses Hydrolysis of Ala-|-Gly bond in repressor LexA.. Its function is as follows. Represses a number of genes involved in the response to DNA damage (SOS response), including recA and lexA. In the presence of single-stranded DNA, RecA interacts with LexA causing an autocatalytic cleavage which disrupts the DNA-binding part of LexA, leading to derepression of the SOS regulon and eventually DNA repair. This chain is LexA repressor, found in Brucella ovis (strain ATCC 25840 / 63/290 / NCTC 10512).